The chain runs to 378 residues: Anhydro-N-acetylmuramic acid kinase (378 aa).

9–16 (GTSADGID) is a binding site for ATP.

It belongs to the anhydro-N-acetylmuramic acid kinase family.

It catalyses the reaction 1,6-anhydro-N-acetyl-beta-muramate + ATP + H2O = N-acetyl-D-muramate 6-phosphate + ADP + H(+). It functions in the pathway amino-sugar metabolism; 1,6-anhydro-N-acetylmuramate degradation. It participates in cell wall biogenesis; peptidoglycan recycling. Functionally, catalyzes the specific phosphorylation of 1,6-anhydro-N-acetylmuramic acid (anhMurNAc) with the simultaneous cleavage of the 1,6-anhydro ring, generating MurNAc-6-P. Is required for the utilization of anhMurNAc either imported from the medium or derived from its own cell wall murein, and thus plays a role in cell wall recycling. The chain is Anhydro-N-acetylmuramic acid kinase from Prochlorococcus marinus (strain NATL1A).